The primary structure comprises 210 residues: Claudin-4 (210 aa).

Residues 1–7 (MASMGLQ) lie on the Cytoplasmic side of the membrane. Residues 1-103 (MASMGLQVMG…GVLLSVVGGK (103 aa)) form an interaction with EPHA2 region. A helical transmembrane segment spans residues 8–28 (VMGIALAVLGWLGAILSCALP). Over 29–81 (MWRVTAFIGSNIVTSQTIWEGLWMNCVVQSTGQMQCKVYDSLLALPQDLQAAR) the chain is Extracellular. A disulfide bridge links C54 with C64. A helical transmembrane segment spans residues 82-102 (ALMVVSIILAALGVLLSVVGG). Over 103 to 117 (KCTNCVEDESAKAKT) the chain is Cytoplasmic. A helical membrane pass occupies residues 118–138 (MIVAGVVFLLAGLLVMVPASW). The Extracellular segment spans residues 139–160 (TANNIIRDFYNPLVVSGQKREM). A helical transmembrane segment spans residues 161 to 181 (GASLYVGWAASGLLLLGGALL). The Cytoplasmic portion of the chain corresponds to 182 to 210 (CCNCPPRADKPYSAKYSAAARSAPASNYV). Y209 is subject to Phosphotyrosine. The interval 209-210 (YV) is interactions with TJP1, TJP2 and TJP3.

This sequence belongs to the claudin family. Can form heteropolymeric strands with other claudins. Interacts with CLDN8. Interacts with CLDN1. Directly interacts with TJP1/ZO-1. Interacts with TJP2/ZO-2 and TJP3/ZO-3. Interacts with EPHA2; phosphorylates CLDN4 and may regulate tight junctions. In terms of processing, phosphorylated. Phosphorylation by EPHA2 is stimulated by EFNA1 and alters interaction with TJP1.

It is found in the cell junction. Its subcellular location is the tight junction. The protein localises to the cell membrane. It catalyses the reaction chloride(in) = chloride(out). It carries out the reaction bromide(in) = bromide(out). The catalysed reaction is iodide(out) = iodide(in). The enzyme catalyses fluoride(in) = fluoride(out). Functionally, can associate with other claudins to regulate tight junction structural and functional strand dynamics. May coassemble with CLDN8 into tight junction strands containing anion-selective channels that convey paracellular chloride permeability in renal collecting ducts. May integrate into CLDN3 strands to modulate localized tight junction barrier properties. May disrupt strand assembly of channel-forming CLDN2 and CLDN15 and inhibit cation conductance. Cannot form tight junction strands on its own. The sequence is that of Claudin-4 (CLDN4) from Canis lupus familiaris (Dog).